The chain runs to 127 residues: Large ribosomal subunit protein bL17 (127 aa).

It belongs to the bacterial ribosomal protein bL17 family. In terms of assembly, part of the 50S ribosomal subunit. Contacts protein L32.

The polypeptide is Large ribosomal subunit protein bL17 (Aeromonas hydrophila subsp. hydrophila (strain ATCC 7966 / DSM 30187 / BCRC 13018 / CCUG 14551 / JCM 1027 / KCTC 2358 / NCIMB 9240 / NCTC 8049)).